An 850-amino-acid chain; its full sequence is Mitochondrial escape protein 2 (850 aa).

The transit peptide at 1-44 (MLLVRTTSLNVSRMPVPCLARGIGILKGKYRLANLMNAQPSVRH) directs the protein to the mitochondrion. Positions 44-66 (HVSSEIQQKDQQAGESNTATDTG) are disordered. At 45–287 (VSSEIQQKDQ…VSNFFTNHTR (243 aa)) the chain is on the mitochondrial matrix side. Over residues 47-64 (SEIQQKDQQAGESNTATD) the composition is skewed to polar residues. Residues 198 to 272 (TTIVIKFQGP…TVLHIQYENI (75 aa)) enclose the RRM domain. A helical membrane pass occupies residues 288–308 (IAIPVLFALLSIFAVLVFDPI). The Mitochondrial intermembrane segment spans residues 309 to 850 (REFSIEQKIT…CEEEIKNLSK (542 aa)). A compositionally biased stretch (basic and acidic residues) spans 607 to 621 (KGENVKEPESEKETA). Residues 607 to 633 (KGENVKEPESEKETAENNDSDSEADTS) are disordered.

Belongs to the YME2 family.

It localises to the mitochondrion inner membrane. In terms of biological role, plays a role in maintaining the mitochondrial genome and in controlling the mtDNA escape. Involved in the regulation of mtDNA nucleotide structure and number. May have a dispensable role in early maturation of pre-rRNA. The sequence is that of Mitochondrial escape protein 2 (YME2) from Saccharomyces cerevisiae (strain ATCC 204508 / S288c) (Baker's yeast).